A 366-amino-acid chain; its full sequence is Histidinol-phosphate aminotransferase 2 (366 aa).

Over residues 1–11 (MQVKDQLSSLQ) the composition is skewed to polar residues. The disordered stretch occupies residues 1–21 (MQVKDQLSSLQPYKPGKSPEQ). Lysine 222 carries the post-translational modification N6-(pyridoxal phosphate)lysine.

The protein belongs to the class-II pyridoxal-phosphate-dependent aminotransferase family. Histidinol-phosphate aminotransferase subfamily. Homodimer. Pyridoxal 5'-phosphate serves as cofactor.

It carries out the reaction L-histidinol phosphate + 2-oxoglutarate = 3-(imidazol-4-yl)-2-oxopropyl phosphate + L-glutamate. It participates in amino-acid biosynthesis; L-histidine biosynthesis; L-histidine from 5-phospho-alpha-D-ribose 1-diphosphate: step 7/9. The polypeptide is Histidinol-phosphate aminotransferase 2 (Bacillus thuringiensis subsp. konkukian (strain 97-27)).